Consider the following 385-residue polypeptide: 2-oxoglutarate-dependent dioxygenase AFUA_1G01000 (385 aa).

Positions 203–327 (PSDDFLRLLR…RYSVLVGTRP (125 aa)) constitute a Fe2OG dioxygenase domain. Residues histidine 230, aspartate 232, and histidine 304 each coordinate Fe cation. Position 318 (arginine 318) interacts with 2-oxoglutarate.

This sequence belongs to the iron/ascorbate-dependent oxidoreductase family. Requires Fe(2+) as cofactor.

Functionally, 2-oxoglutarate-dependent dioxygenase; part of the gene cluster that mediates the biosynthesis of fumigermin that inhibits germination of spores of the inducing S.rapamycinicus, and thus helps the fungus to defend resources in the shared habitat against a bacterial competitor. The partially reducing polyketide synthase fngA alone is sufficient for the production of fumigermin. FgnA catalyzes the condensation of 3 malonyl-CoA units to an acetyl-CoA starter, and 3 methylations to yield fumigermin. It is remarkable that the five cluster genes including fgnA are conserved in distantly related fungi, supporting the assumption of a fumigermin cluster; it is thus possible that originally all five genes were functional, but that the genes encoding tailoring enzymes became inactive from mutations, similar to the case of the fgnA gene in strains A1163 and Af293. The protein is 2-oxoglutarate-dependent dioxygenase AFUA_1G01000 of Aspergillus fumigatus (strain ATCC MYA-4609 / CBS 101355 / FGSC A1100 / Af293) (Neosartorya fumigata).